The chain runs to 277 residues: Diaminopimelate epimerase (277 aa).

Positions 11 and 65 each coordinate substrate. The active-site Proton donor is the C74. Substrate is bound by residues 75 to 76 (GN), N180, and 198 to 199 (ER). C208 acts as the Proton acceptor in catalysis. Position 209–210 (209–210 (GT)) interacts with substrate.

This sequence belongs to the diaminopimelate epimerase family. In terms of assembly, homodimer.

The protein resides in the cytoplasm. It catalyses the reaction (2S,6S)-2,6-diaminopimelate = meso-2,6-diaminopimelate. The protein operates within amino-acid biosynthesis; L-lysine biosynthesis via DAP pathway; DL-2,6-diaminopimelate from LL-2,6-diaminopimelate: step 1/1. Its function is as follows. Catalyzes the stereoinversion of LL-2,6-diaminopimelate (L,L-DAP) to meso-diaminopimelate (meso-DAP), a precursor of L-lysine and an essential component of the bacterial peptidoglycan. In Gemmatimonas aurantiaca (strain DSM 14586 / JCM 11422 / NBRC 100505 / T-27), this protein is Diaminopimelate epimerase.